The following is a 212-amino-acid chain: MGDWGRADYLSRHGIKDARVLEAIARLNRADFVPEDLREEASADSPLPIGHGQTISQPYVVALMTEALQLQGDERVLEIGTGSGYQTALLSLLCREVYSVEIVPELAQSAREVLGRQGFENVSFREGDGSLGWPDQAPFDAILAAAAPPDVPLQLLSQLKPGGRMIIPVGPRGGTQQLLRIQRALRPGEVPQVESLLSVRFVPMTGQPLSQG.

Serine 56 is an active-site residue.

The protein belongs to the methyltransferase superfamily. L-isoaspartyl/D-aspartyl protein methyltransferase family.

The protein localises to the cytoplasm. It catalyses the reaction [protein]-L-isoaspartate + S-adenosyl-L-methionine = [protein]-L-isoaspartate alpha-methyl ester + S-adenosyl-L-homocysteine. Functionally, catalyzes the methyl esterification of L-isoaspartyl residues in peptides and proteins that result from spontaneous decomposition of normal L-aspartyl and L-asparaginyl residues. It plays a role in the repair and/or degradation of damaged proteins. The chain is Protein-L-isoaspartate O-methyltransferase from Myxococcus xanthus (strain DK1622).